Reading from the N-terminus, the 194-residue chain is Probable nicotinate-nucleotide adenylyltransferase (194 aa).

The protein belongs to the NadD family.

The enzyme catalyses nicotinate beta-D-ribonucleotide + ATP + H(+) = deamido-NAD(+) + diphosphate. It functions in the pathway cofactor biosynthesis; NAD(+) biosynthesis; deamido-NAD(+) from nicotinate D-ribonucleotide: step 1/1. Catalyzes the reversible adenylation of nicotinate mononucleotide (NaMN) to nicotinic acid adenine dinucleotide (NaAD). This Brucella abortus (strain 2308) protein is Probable nicotinate-nucleotide adenylyltransferase.